The chain runs to 304 residues: Dipeptide transport system permease protein DppC (304 aa).

Residues 1-24 (MKTEHAKPLMTPEPNSPPPEDQYT) form a disordered region. 6 consecutive transmembrane segments (helical) span residues 41 to 61 (LAIVGLIIITSFILIAIFAPL), 108 to 128 (VGFFAVTGALIFGTTLGLIAG), 141 to 161 (IFDIMLAFPSILLAIAIVAIL), 164 to 184 (SLQNALIAIAIVNVPIFGRLV), 227 to 247 (ATLGFGTAILEAAALGFLGLG), and 271 to 291 (WTVLFPGFSIMLVVLGFNMIG). Residues 102–291 (ARLSLQVGFF…LVVLGFNMIG (190 aa)) enclose the ABC transmembrane type-1 domain.

Belongs to the binding-protein-dependent transport system permease family. OppBC subfamily.

The protein resides in the cell membrane. Functionally, probably part of the ABC transporter Dpp involved in dipeptide transport. Responsible for the translocation of the substrate across the membrane. In Alkalihalophilus pseudofirmus (strain ATCC BAA-2126 / JCM 17055 / OF4) (Bacillus pseudofirmus), this protein is Dipeptide transport system permease protein DppC (dppC).